A 228-amino-acid polypeptide reads, in one-letter code: MNALRLIRIMQFADSVLPVGAFSFSNGLESAIQSKIVYDVATLSDFTRTALLQAVSSDGRAVMAACQALNSGQHDAAISHDWAIFNRKLNEESRTMVTRMGKKLAEMAVEVTGESLIAWWLAQIKSDIAAGTYPITLAVVMSALGAAPREVIVMHQYGVAMTILSAAIRLMRVTHIDIQRILFSLNQDIELFCDEAEKGGIEQMTSYAPMTDVLAALHVSAFTRLFSN.

This sequence belongs to the UreF family. UreD, UreF and UreG form a complex that acts as a GTP-hydrolysis-dependent molecular chaperone, activating the urease apoprotein by helping to assemble the nickel containing metallocenter of UreC. The UreE protein probably delivers the nickel.

The protein localises to the cytoplasm. Required for maturation of urease via the functional incorporation of the urease nickel metallocenter. This Photorhabdus laumondii subsp. laumondii (strain DSM 15139 / CIP 105565 / TT01) (Photorhabdus luminescens subsp. laumondii) protein is Urease accessory protein UreF.